The following is a 320-amino-acid chain: 4-diphosphocytidyl-2-C-methyl-D-erythritol kinase (320 aa).

K20 is a catalytic residue. 112 to 122 contacts ATP; sequence PVAGGMGGGSA. D154 is a catalytic residue.

The protein belongs to the GHMP kinase family. IspE subfamily.

The catalysed reaction is 4-CDP-2-C-methyl-D-erythritol + ATP = 4-CDP-2-C-methyl-D-erythritol 2-phosphate + ADP + H(+). Its pathway is isoprenoid biosynthesis; isopentenyl diphosphate biosynthesis via DXP pathway; isopentenyl diphosphate from 1-deoxy-D-xylulose 5-phosphate: step 3/6. Functionally, catalyzes the phosphorylation of the position 2 hydroxy group of 4-diphosphocytidyl-2C-methyl-D-erythritol. The protein is 4-diphosphocytidyl-2-C-methyl-D-erythritol kinase of Pseudarthrobacter chlorophenolicus (strain ATCC 700700 / DSM 12829 / CIP 107037 / JCM 12360 / KCTC 9906 / NCIMB 13794 / A6) (Arthrobacter chlorophenolicus).